Consider the following 110-residue polypeptide: Large ribosomal subunit protein P2B (110 aa).

The span at 73-88 (TPAAGGAAGAEATSAA) shows a compositional bias: low complexity. The disordered stretch occupies residues 73–110 (TPAAGGAAGAEATSAAEEAKEEEAAEESDEDMGFGLFD). Residues 91–104 (AKEEEAAEESDEDM) are compositionally biased toward acidic residues. Residue S100 is modified to Phosphoserine.

It belongs to the eukaryotic ribosomal protein P1/P2 family. In terms of assembly, component of the large ribosomal subunit (LSU). Mature yeast ribosomes consist of a small (40S) and a large (60S) subunit. The 40S small subunit contains 1 molecule of ribosomal RNA (18S rRNA) and at least 33 different proteins. The large 60S subunit contains 3 rRNA molecules (25S, 5.8S and 5S rRNA) and at least 46 different proteins. The acidic ribosomal P-proteins form the stalk structure of the 60S subunit. They are organized as a pentameric complex in which uL10/P0 interacts with 2 heterodimers of P1 and P2 proteins.

It is found in the cytoplasm. In terms of biological role, component of the ribosome, a large ribonucleoprotein complex responsible for the synthesis of proteins in the cell. The small ribosomal subunit (SSU) binds messenger RNAs (mRNAs) and translates the encoded message by selecting cognate aminoacyl-transfer RNA (tRNA) molecules. The large subunit (LSU) contains the ribosomal catalytic site termed the peptidyl transferase center (PTC), which catalyzes the formation of peptide bonds, thereby polymerizing the amino acids delivered by tRNAs into a polypeptide chain. The nascent polypeptides leave the ribosome through a tunnel in the LSU and interact with protein factors that function in enzymatic processing, targeting, and the membrane insertion of nascent chains at the exit of the ribosomal tunnel. This chain is Large ribosomal subunit protein P2B (rpp202), found in Schizosaccharomyces pombe (strain 972 / ATCC 24843) (Fission yeast).